The primary structure comprises 84 residues: Small ribosomal subunit protein bS16 (84 aa).

Belongs to the bacterial ribosomal protein bS16 family.

The polypeptide is Small ribosomal subunit protein bS16 (Deinococcus radiodurans (strain ATCC 13939 / DSM 20539 / JCM 16871 / CCUG 27074 / LMG 4051 / NBRC 15346 / NCIMB 9279 / VKM B-1422 / R1)).